Consider the following 36-residue polypeptide: Delta-amaurobitoxin-Pl1c (36 aa).

4 disulfide bridges follow: Cys3–Cys19, Cys10–Cys24, Cys18–Cys34, and Cys26–Cys32.

As to expression, expressed by the venom gland.

It is found in the secreted. Its function is as follows. Binds at site 4 of sodium channels (Nav) and inhibits the fast inactivation of cockroach channels. This toxin is active only on insects. Has a potent activity against S.litura larvae. In Pireneitega luctuosa (Tangled nest spider), this protein is Delta-amaurobitoxin-Pl1c.